A 272-amino-acid polypeptide reads, in one-letter code: Undecaprenyl-diphosphatase (272 aa).

8 helical membrane-spanning segments follow: residues 5–25 (YSLF…FLPV), 45–65 (AKTF…VVFW), 88–108 (HLTL…GLAF), 114–134 (ALFD…LLLA), 153–172 (YRQA…PGFS), 189–209 (YAAS…ASGL), 221–241 (GDLP…LIAI), and 251–271 (ISFV…YWVF).

It belongs to the UppP family.

The protein resides in the cell inner membrane. It catalyses the reaction di-trans,octa-cis-undecaprenyl diphosphate + H2O = di-trans,octa-cis-undecaprenyl phosphate + phosphate + H(+). Its function is as follows. Catalyzes the dephosphorylation of undecaprenyl diphosphate (UPP). Confers resistance to bacitracin. In Yersinia pseudotuberculosis serotype IB (strain PB1/+), this protein is Undecaprenyl-diphosphatase.